The sequence spans 180 residues: Major urinary protein 1 (180 aa).

The first 18 residues, 1-18 (MKMLLLLCLGLTLVCVHA), serve as a signal peptide directing secretion. An intrachain disulfide couples Cys-82 to Cys-175.

It belongs to the calycin superfamily. Lipocalin family. Abundant in the urine of adult male mice but absent from that of females.

Its subcellular location is the secreted. Functionally, binds pheromones that are released from drying urine of males. These pheromones affect the sexual behavior of females. This chain is Major urinary protein 1 (Mup1), found in Mus musculus (Mouse).